A 183-amino-acid chain; its full sequence is Myelin-associated oligodendrocyte basic protein (183 aa).

The interval 68–183 is disordered; the sequence is TRTSRRAKSP…GSPVKASRFW (116 aa). Residues 69-78 show a composition bias toward basic residues; it reads RTSRRAKSPQ. Low complexity predominate over residues 79-96; that stretch reads RPKQQPAAPPAVVRAPAK. Tandem repeats lie at residues 97 to 106, 107 to 116, 117 to 126, and 127 to 136. A 4 X 10 AA tandem repeats of P-R-S-P-P-R-S-E-R-Q region spans residues 97-136; sequence PRSPPRSERQPRSPPRSERQPRSPPRSERQPRSPPRSERQ. 2 positions are modified to phosphoserine: Ser99 and Ser109. The span at 101–143 shows a compositional bias: basic and acidic residues; sequence PRSERQPRSPPRSERQPRSPPRSERQPRSPPRSERQPRPRPEV. Residues 151–164 show a composition bias toward low complexity; sequence RPPQKSKQQPRSSP.

Its subcellular location is the cytoplasm. It localises to the perinuclear region. Functionally, may play a role in compacting or stabilizing the myelin sheath, possibly by binding the negatively charged acidic phospholipids of the cytoplasmic membrane. The chain is Myelin-associated oligodendrocyte basic protein (MOBP) from Homo sapiens (Human).